The chain runs to 308 residues: Acetaldehyde dehydrogenase (308 aa).

Residue 14–17 (TGNI) participates in NAD(+) binding. Cys-129 functions as the Acyl-thioester intermediate in the catalytic mechanism. Residues 160-168 (SAGPGTRQN) and Asn-280 each bind NAD(+).

The protein belongs to the acetaldehyde dehydrogenase family.

The catalysed reaction is acetaldehyde + NAD(+) + CoA = acetyl-CoA + NADH + H(+). The protein is Acetaldehyde dehydrogenase of Thermomicrobium roseum (strain ATCC 27502 / DSM 5159 / P-2).